Reading from the N-terminus, the 78-residue chain is Putative defensin-like protein 202 (78 aa).

The first 29 residues, 1–29 (MAKTQNFVCFTAVLLILILVSTEIPMIEG), serve as a signal peptide directing secretion. Intrachain disulfides connect cysteine 44–cysteine 65, cysteine 49–cysteine 74, and cysteine 53–cysteine 76.

Belongs to the DEFL family.

The protein localises to the secreted. This chain is Putative defensin-like protein 202, found in Arabidopsis thaliana (Mouse-ear cress).